A 182-amino-acid chain; its full sequence is ATP-dependent protease subunit HslV (182 aa).

Thr12 is an active-site residue. The Na(+) site is built by Ala167, Cys170, and Thr173.

Belongs to the peptidase T1B family. HslV subfamily. A double ring-shaped homohexamer of HslV is capped on each side by a ring-shaped HslU homohexamer. The assembly of the HslU/HslV complex is dependent on binding of ATP.

The protein localises to the cytoplasm. It carries out the reaction ATP-dependent cleavage of peptide bonds with broad specificity.. Allosterically activated by HslU binding. Functionally, protease subunit of a proteasome-like degradation complex believed to be a general protein degrading machinery. This chain is ATP-dependent protease subunit HslV, found in Pelodictyon phaeoclathratiforme (strain DSM 5477 / BU-1).